The chain runs to 321 residues: Putative ankyrin repeat domain-containing protein 26-like protein (321 aa).

ANK repeat units lie at residues 48–78, 82–111, 115–144, 148–177, and 181–210; these read KHLG…DLDE, KKRT…QLDV, KNRT…DPDL, YGNT…NIES, and DELT…NLTA. Disordered regions lie at residues 222–242 and 268–321; these read EYKE…GTSN and FNKP…NENI. Polar residues predominate over residues 229–242; it reads PRNPQNSNPEGTSN.

The polypeptide is Putative ankyrin repeat domain-containing protein 26-like protein (ANKRD26P1) (Homo sapiens (Human)).